Consider the following 443-residue polypeptide: UDP-N-acetylmuramate--L-alanine ligase (443 aa).

110 to 116 lines the ATP pocket; it reads GAHGKTS.

This sequence belongs to the MurCDEF family.

It localises to the cytoplasm. It carries out the reaction UDP-N-acetyl-alpha-D-muramate + L-alanine + ATP = UDP-N-acetyl-alpha-D-muramoyl-L-alanine + ADP + phosphate + H(+). It functions in the pathway cell wall biogenesis; peptidoglycan biosynthesis. In terms of biological role, cell wall formation. This is UDP-N-acetylmuramate--L-alanine ligase from Streptococcus equi subsp. zooepidemicus (strain H70).